A 222-amino-acid polypeptide reads, in one-letter code: Phosphoribosylformylglycinamidine synthase subunit PurQ (222 aa).

In terms of domain architecture, Glutamine amidotransferase type-1 spans 3–222 (AAVVVFPGSN…RALTGALAAV (220 aa)). Cys86 serves as the catalytic Nucleophile. Catalysis depends on residues His194 and Glu196.

Part of the FGAM synthase complex composed of 1 PurL, 1 PurQ and 2 PurS subunits.

It localises to the cytoplasm. It carries out the reaction N(2)-formyl-N(1)-(5-phospho-beta-D-ribosyl)glycinamide + L-glutamine + ATP + H2O = 2-formamido-N(1)-(5-O-phospho-beta-D-ribosyl)acetamidine + L-glutamate + ADP + phosphate + H(+). The enzyme catalyses L-glutamine + H2O = L-glutamate + NH4(+). Its pathway is purine metabolism; IMP biosynthesis via de novo pathway; 5-amino-1-(5-phospho-D-ribosyl)imidazole from N(2)-formyl-N(1)-(5-phospho-D-ribosyl)glycinamide: step 1/2. Its function is as follows. Part of the phosphoribosylformylglycinamidine synthase complex involved in the purines biosynthetic pathway. Catalyzes the ATP-dependent conversion of formylglycinamide ribonucleotide (FGAR) and glutamine to yield formylglycinamidine ribonucleotide (FGAM) and glutamate. The FGAM synthase complex is composed of three subunits. PurQ produces an ammonia molecule by converting glutamine to glutamate. PurL transfers the ammonia molecule to FGAR to form FGAM in an ATP-dependent manner. PurS interacts with PurQ and PurL and is thought to assist in the transfer of the ammonia molecule from PurQ to PurL. This Roseobacter denitrificans (strain ATCC 33942 / OCh 114) (Erythrobacter sp. (strain OCh 114)) protein is Phosphoribosylformylglycinamidine synthase subunit PurQ.